Here is a 796-residue protein sequence, read N- to C-terminus: Protein translocase subunit SecA 2 (796 aa).

Residues Gln84, 102 to 106 (GEGKT), and Asp496 each bind ATP.

This sequence belongs to the SecA family. In terms of assembly, monomer and homodimer. Part of the essential Sec protein translocation apparatus which comprises SecA, SecYEG and auxiliary proteins SecDF. Other proteins may also be involved.

It localises to the cell membrane. The protein resides in the cytoplasm. It catalyses the reaction ATP + H2O + cellular proteinSide 1 = ADP + phosphate + cellular proteinSide 2.. Its function is as follows. Part of the Sec protein translocase complex. Interacts with the SecYEG preprotein conducting channel. Has a central role in coupling the hydrolysis of ATP to the transfer of proteins into and across the cell membrane, serving as an ATP-driven molecular motor driving the stepwise translocation of polypeptide chains across the membrane. The polypeptide is Protein translocase subunit SecA 2 (Staphylococcus aureus (strain Mu3 / ATCC 700698)).